A 104-amino-acid polypeptide reads, in one-letter code: MIRKAFVMQVNADAHEEYQRRHNPIWPELEAVLKSHGAHHYAIYLDVERNLLFATVEIESEARWNAVASTDICQRWWKHMRDVMPANPDNSPVSAELKEVFWLA.

Y18 serves as a coordination point for substrate. Residue H22 is the Proton donor of the active site. Residues Y41 and 76-77 (WW) each bind substrate.

The protein belongs to the rhamnose mutarotase family. Homodimer.

It localises to the cytoplasm. The catalysed reaction is alpha-L-rhamnose = beta-L-rhamnose. It functions in the pathway carbohydrate metabolism; L-rhamnose metabolism. Its function is as follows. Involved in the anomeric conversion of L-rhamnose. In Salmonella arizonae (strain ATCC BAA-731 / CDC346-86 / RSK2980), this protein is L-rhamnose mutarotase.